Reading from the N-terminus, the 482-residue chain is Iroquois-class homeodomain protein irx-5 (482 aa).

The segment at residues 109–171 (DPAYRKNATR…NARRRLKKEN (63 aa)) is a DNA-binding region (homeobox). Disordered stretches follow at residues 173–307 (MTWT…HQSH) and 462–482 (QSQA…MSSI). The span at 182–198 (EDEEDDENIDLEKNEED) shows a compositional bias: acidic residues. Over residues 199–256 (DPRKLEEKGDQDGDAGDQKRSPSAVDFDRLEGEVRQGKELDQTRSDSEQNEVEERNDL) the composition is skewed to basic and acidic residues. The segment covering 264–273 (PTSPLCPPDQ) has biased composition (pro residues). Positions 284 to 305 (HRHTVHNHHHQSIQQLHHHSHQ) are enriched in basic residues. Basic and acidic residues predominate over residues 467 to 482 (LNKDTPYEMKKGMSSI).

Belongs to the TALE/IRO homeobox family. Expressed in the neural plate in overlapping patterns with other irx members, which all share an anterior border of expression. Broadly expressed in the tailbud rhombencephalon (hindbrain). Outside the nervous system and at tailbud stages, expressed in the developing otic vesicle and branchial arches.

It is found in the nucleus. Its function is as follows. Acts partially redundantly with other irx members in neural patterning. Required for formation of the posterior forebrain, midbrain, hindbrain, and to a lesser extent, spinal cord. Patterns the neuroectoderm in both the anterior/posterior and dorsal/ventral axes. Does not appear to play a role in pronephros kidney development. Involved in craniofacial and gonadal development. Modulates the migration of progenitor cell populations in branchial arches and gonads by repressing CXCL12. The chain is Iroquois-class homeodomain protein irx-5 from Xenopus tropicalis (Western clawed frog).